The following is a 727-amino-acid chain: Endothelin-converting enzyme homolog (727 aa).

The Cytoplasmic segment spans residues 1–44; that stretch reads MSFNFSRYSGAYTTTFSFLLLALLIVSAVLLSRPYAPALLHAEE. The helical; Signal-anchor for type II membrane protein transmembrane segment at 45–65 threads the bilayer; it reads AYCVSMSCVTAAASVLSLMDA. The Peptidase M13 domain maps to 46 to 727; the sequence is YCVSMSCVTA…MNPVHKCEVW (682 aa). 5 disulfides stabilise this stretch: cysteine 47–cysteine 52, cysteine 70–cysteine 712, cysteine 78–cysteine 672, cysteine 134–cysteine 392, and cysteine 601–cysteine 724. Residues 66 to 727 are Extracellular-facing; the sequence is TADPCSDFYQ…MNPVHKCEVW (662 aa). N-linked (GlcNAc...) asparagine glycosylation is found at asparagine 138, asparagine 160, asparagine 164, asparagine 169, asparagine 222, asparagine 309, asparagine 337, asparagine 340, and asparagine 511. Histidine 564 provides a ligand contact to Zn(2+). Glutamate 565 is an active-site residue. Histidine 568 is a Zn(2+) binding site. Residues asparagine 589 and asparagine 608 are each glycosylated (N-linked (GlcNAc...) asparagine). Residue glutamate 624 coordinates Zn(2+). Residue aspartate 628 is the Proton donor of the active site. N-linked (GlcNAc...) asparagine glycosylation occurs at asparagine 656.

This sequence belongs to the peptidase M13 family. The cofactor is Zn(2+). As to expression, highly expressed in brain and midgut, and to a lesser extent in fat body, ovaries, testes and haemocytes.

Its subcellular location is the cell membrane. The sequence is that of Endothelin-converting enzyme homolog from Locusta migratoria (Migratory locust).